A 67-amino-acid chain; its full sequence is Disintegrin EC3A (67 aa).

Positions 1–65 (NSVHPCCDPV…DCPRNRYKGK (65 aa)) constitute a Disintegrin domain. 4 cysteine pairs are disulfide-bonded: Cys6–Cys29, Cys20–Cys26, Cys25–Cys50, and Cys38–Cys57. The short motif at 42 to 44 (VGD) is the Cell attachment site; atypical (VGD) element.

This sequence belongs to the venom metalloproteinase (M12B) family. P-II subfamily. P-IIe sub-subfamily. Heterodimer with EC3B; disulfide-linked. As to expression, expressed by the venom gland.

Its subcellular location is the secreted. In terms of biological role, inhibits adhesion of cells expressing alpha-4/beta-1 (ITGA4/ITGB1) and alpha-4/beta-7 (ITGA4/ITGB7) integrins to the natural ligands vascular cell adhesion molecule 1 (VCAM-1) and mucosal addressin cell adhesion molecule 1 (MADCAM-1). It is also a weaker inhibitor of alpha-5/beta-1 (ITGA5/ITGB1) and alpha-2b/beta-3 (ITGA2B/ITGB3) integrins. The inhibitory activity of EC3 towards alpha-4 integrins is associated with the MLD sequence of EC3B subunit. The ability of EC3 to inhibit ITGA5/ITGB1 resides in both subunits A and B. The sequence is that of Disintegrin EC3A from Echis carinatus (Saw-scaled viper).